Here is a 289-residue protein sequence, read N- to C-terminus: Protoheme IX farnesyltransferase (289 aa).

A run of 9 helical transmembrane segments spans residues 9–29 (VALM…PVMM), 40–60 (LIAV…TINC), 89–109 (LTFG…LVNW), 110–130 (PSAL…TLGL), 134–154 (TPSN…IGWS), 155–175 (AVTG…FFWT), 190–209 (YAAA…VVTR), 228–248 (VAST…WFLV), and 269–289 (FHMS…TALV).

It belongs to the UbiA prenyltransferase family. Protoheme IX farnesyltransferase subfamily.

The protein resides in the cell membrane. The catalysed reaction is heme b + (2E,6E)-farnesyl diphosphate + H2O = Fe(II)-heme o + diphosphate. The protein operates within porphyrin-containing compound metabolism; heme O biosynthesis; heme O from protoheme: step 1/1. Its function is as follows. Converts heme B (protoheme IX) to heme O by substitution of the vinyl group on carbon 2 of heme B porphyrin ring with a hydroxyethyl farnesyl side group. This is Protoheme IX farnesyltransferase from Frankia casuarinae (strain DSM 45818 / CECT 9043 / HFP020203 / CcI3).